We begin with the raw amino-acid sequence, 621 residues long: F-box/LRR-repeat protein 4 (621 aa).

An Asymmetric dimethylarginine modification is found at arginine 28. Residues asparagine 277–leucine 332 form the F-box domain. LRR repeat units follow at residues glutamate 376–serine 397, asparagine 402–histidine 421, serine 427–asparagine 448, glutamate 452–isoleucine 474, asparagine 480–alanine 501, cysteine 504–cysteine 524, leucine 532–cysteine 558, threonine 559–serine 583, and cysteine 584–serine 609.

Part of a SCF (SKP1-CUL1-F-box) protein ligase complex. Interacts with FAF2 and VCP. Interacts with PPTC7; this interaction promotes destruction of BNIP3 and NIX and mitophagy suppression.

It localises to the cytoplasm. Its subcellular location is the nucleus. The protein resides in the mitochondrion outer membrane. In terms of biological role, substrate-recognition component of the mitochondria-localized SCF-FBXL4 ubiquitin E3 ligase complex that plays a role in the restriction of mitophagy by controlling the degradation of BNIP3 and NIX mitophagy receptors. Also rescues mitochondrial injury through reverting hyperactivation of DRP1-mediated mitochondrial fission. This Mus musculus (Mouse) protein is F-box/LRR-repeat protein 4 (Fbxl4).